The following is a 142-amino-acid chain: Hemoglobin subunit alpha (142 aa).

Ser1 is subject to N-acetylserine. The Globin domain maps to Ser1 to Arg142. His59 contributes to the O2 binding site. His88 provides a ligand contact to heme b.

Belongs to the globin family. As to quaternary structure, heterotetramer of two alpha chains and two beta chains. Can form polymers. Red blood cells.

Functionally, involved in oxygen transport from gills to the various peripheral tissues. The protein is Hemoglobin subunit alpha (hba) of Chelidonichthys kumu (Bluefin gurnard).